Here is a 289-residue protein sequence, read N- to C-terminus: Homoserine kinase (289 aa).

79–89 (PLARGLGSSSS) is a binding site for ATP.

The protein belongs to the GHMP kinase family. Homoserine kinase subfamily.

Its subcellular location is the cytoplasm. It carries out the reaction L-homoserine + ATP = O-phospho-L-homoserine + ADP + H(+). It functions in the pathway amino-acid biosynthesis; L-threonine biosynthesis; L-threonine from L-aspartate: step 4/5. Its function is as follows. Catalyzes the ATP-dependent phosphorylation of L-homoserine to L-homoserine phosphate. The polypeptide is Homoserine kinase (Streptococcus pneumoniae serotype 2 (strain D39 / NCTC 7466)).